The chain runs to 355 residues: Protein pelota homolog (355 aa).

The protein belongs to the eukaryotic release factor 1 family. Pelota subfamily. As to quaternary structure, monomer. Requires a divalent metal cation as cofactor.

It is found in the cytoplasm. In terms of biological role, may function in recognizing stalled ribosomes, interact with stem-loop structures in stalled mRNA molecules, and effect endonucleolytic cleavage of the mRNA. May play a role in the release non-functional ribosomes and degradation of damaged mRNAs. Has endoribonuclease activity. The chain is Protein pelota homolog from Natronomonas pharaonis (strain ATCC 35678 / DSM 2160 / CIP 103997 / JCM 8858 / NBRC 14720 / NCIMB 2260 / Gabara) (Halobacterium pharaonis).